We begin with the raw amino-acid sequence, 953 residues long: Nucleotide-binding oligomerization domain-containing protein 1 (953 aa).

A CARD domain is found at 15 to 105 (ESHPHIQLLK…AYVDLRPWLL (91 aa)). Positions 196–531 (ETIFILGDAG…AFFTAFFLVL (336 aa)) constitute an NACHT domain. Residue 202 to 209 (GDAGVGKS) participates in ATP binding. 2 S-palmitoyl cysteine lipidation sites follow: cysteine 558 and cysteine 567. LRR repeat units lie at residues 632–656 (LKSL…IWML), 702–725 (FPKR…ELQP), 727–750 (FSRL…VLSE), 755–778 (YKIV…YVTK), 783–806 (CKGL…YLAL), 839–862 (HPSL…SLAR), 867–891 (NTSL…LAEM), 895–918 (NQTL…QLAD), and 923–946 (NTGI…VYED). A lipid anchor (S-palmitoyl cysteine) is attached at cysteine 952.

Belongs to the NOD1-NOD2 family. As to quaternary structure, homooligomer: homooligomerizes following ligand-binding, promoting RIPK2 recruitment. Interacts (via CARD domain) with RIPK2 (via CARD domain). Following RIPK2 recruitment, RIPK2 homooligomerizes via its CARD domain and forms long filaments named RIPosomes. Interacts with ARHGEF2. Interacts (via CARD domain) with ubiquitin; inhibiting interaction with RIPK2. Interacts with NLRP10 and recruits it to the cell membrane following invasive bacterial infection. Interacts with IFIH1; this interaction promotes transcription of antiviral genes and inhibition of viral replication. Interacts with IRGM; promoting NOD1 degradation. Interacts with ATG16L1. In terms of processing, palmitoylated. Palmitoylation is required for proper recruitment to the bacterial entry site and hence for proper signaling upon cognate peptidoglycan detection. Post-translationally, ubiquitinated. 'Lys-48'-linked polyubiquitination by RNF34 promotes proteasomal degradation and thereby negatively regulates NOD1 for instance in NF-kappa-B activation. Degraded via selective autophagy following interaction with IRGM. IRGM promotes NOD1-RIPK2 RIPosome recruitment to autophagosome membranes, promoting their SQSTM1/p62-dependent autophagic degradation. Highly expressed in adult heart, skeletal muscle, pancreas, spleen and ovary. Also detected in placenta, lung, liver, kidney, thymus, testis, small intestine and colon.

It is found in the cell membrane. The protein localises to the apical cell membrane. Its subcellular location is the basolateral cell membrane. It localises to the cytoplasm. Its function is as follows. Pattern recognition receptor (PRR) that detects bacterial peptidoglycan fragments and other danger signals and thus participates in both innate and adaptive immune responses. Specifically recognizes and binds gamma-D-glutamyl-meso-diaminopimelic acid (iE-DAP), a dipeptide present in peptidoglycan of Gram-negative bacteria. Preferentially binds iE-DAP in tripeptide-containing muropeptides (MurNAc-TriDAP or TriDAP). Ligand binding triggers oligomerization that facilitates the binding and subsequent activation of the proximal adapter receptor-interacting RIPK2. Following recruitment, RIPK2 undergoes 'Met-1'- (linear) and 'Lys-63'-linked polyubiquitination by E3 ubiquitin-protein ligases XIAP, BIRC2, BIRC3 and the LUBAC complex, becoming a scaffolding protein for downstream effectors, triggering activation of the NF-kappa-B and MAP kinases signaling. This in turn leads to the transcriptional activation of hundreds of genes involved in immune response. Also acts as a regulator of antiviral response elicited by dsRNA and the expression of RLR pathway members by targeting IFIH1 and TRAF3 to modulate the formation of IFIH1-MAVS and TRAF3-MAVS complexes leading to increased transcription of type I IFNs. Also acts as a regulator of autophagy via its interaction with ATG16L1, possibly by recruiting ATG16L1 at the site of bacterial entry. Besides recognizing pathogens, also involved in the endoplasmic reticulum stress response: acts by sensing and binding to the cytosolic metabolite sphingosine-1-phosphate generated in response to endoplasmic reticulum stress, initiating an inflammation process that leads to activation of the NF-kappa-B and MAP kinases signaling. In addition, plays a role in insulin trafficking in beta cells in a cell-autonomous manner. Mechanistically, upon recognizing cognate ligands, NOD1 and RIPK2 localize to insulin vesicles where they recruit RAB1A to direct insulin trafficking through the cytoplasm. In contrast to isoform 1, does not efficiently recognize and bind gamma-D-glutamyl-meso-diaminopimelic acid (iE-DAP) ligand. The sequence is that of Nucleotide-binding oligomerization domain-containing protein 1 from Homo sapiens (Human).